The following is a 234-amino-acid chain: Ribosomal RNA small subunit methyltransferase G (234 aa).

Positions 85, 90, and 155 each coordinate S-adenosyl-L-methionine.

Belongs to the methyltransferase superfamily. RNA methyltransferase RsmG family.

It localises to the cytoplasm. It carries out the reaction guanosine(527) in 16S rRNA + S-adenosyl-L-methionine = N(7)-methylguanosine(527) in 16S rRNA + S-adenosyl-L-homocysteine. Functionally, specifically methylates the N7 position of guanine in position 527 of 16S rRNA. This is Ribosomal RNA small subunit methyltransferase G from Rhodopseudomonas palustris (strain BisB18).